Here is a 262-residue protein sequence, read N- to C-terminus: Transmembrane protein 106A (262 aa).

The chain crosses the membrane as a helical span at residues 95-115 (FVFLAVLICLVTSSFIVFFLF).

The protein belongs to the TMEM106 family. Expressed in renal cells (at protein level). Expressed in epithelial cells.

It is found in the cell membrane. Functionally, activates macrophages and polarizes them into M1-like macrophages through the activation of the MAPK and NF-kappaB signaling pathway. Upon activation, up-regulates the expression of CD80, CD86, CD69 and MHC II on macrophages, and induces the release of pro-inflammatory cytokines such as TNF, IL1B, IL6, CCL2 and nitric oxide. May play a role in inhibition of proliferation and migration. The chain is Transmembrane protein 106A (TMEM106A) from Homo sapiens (Human).